The primary structure comprises 214 residues: uncharacterized protein (214 aa).

The Proton acceptor role is filled by tyrosine 129.

Belongs to the NAD(P)-dependent epimerase/dehydratase family.

This is an uncharacterized protein from Bacillus subtilis (strain 168).